The sequence spans 210 residues: Fibroblast growth factor 8 (210 aa).

The signal sequence occupies residues M1–Q27.

The protein belongs to the heparin-binding growth factors family. Monomer. Homodimer.

The protein localises to the secreted. Plays an important role in the regulation of embryonic development, cell proliferation, cell differentiation and cell migration. Required for Kupffer's vesicle ciliogenesis. The chain is Fibroblast growth factor 8 from Danio rerio (Zebrafish).